The primary structure comprises 414 residues: MTQANLSETLFKPRFKHTETSTLVRRFNRGSQPPMQSALDGKNVPHWYRMINRLMWIWRGVDPREILDVQARIVMSDAERTDDDLYDTVIGYRGGNWIYEWAKQAMDWQQKACQEQDAMRSGRYWLHASTLYNIAAYPHLKGDELAEQAQALANRAYEEAAQRLPGSLREMEFAVPGGSPVTAFLHMPKGDGPFPTVLMCGGLDAMQTDYYTLYERYFAPRGIAMLTLDMPSVGFSSKWKLTQDSSLLHQHVLKALPNVPWVDHTRVAAFGFRFGANVAVRLAYLEAPRLKAVACLGPVVHALLSDPQRQSTVPEMYLDVLASRLGMHDASDEALRVELNRYSLKVQGLLGRRCPTPMLSGFWKNDPFSPEEESRLITTSSSDGKLIEIPFNPVYRNFDHALQEITDWINHRLC.

It belongs to the FrsA family.

The enzyme catalyses a carboxylic ester + H2O = an alcohol + a carboxylate + H(+). Catalyzes the hydrolysis of esters. This chain is Esterase FrsA, found in Salmonella agona (strain SL483).